The sequence spans 98 residues: Plastocyanin (98 aa).

Residues 1–98 (AQIVKLGGDD…AGMKMTITVQ (98 aa)) enclose the Plastocyanin-like domain. The Cu(2+) site is built by histidine 38, cysteine 83, histidine 86, and methionine 91.

Belongs to the plastocyanin family. It depends on Cu(2+) as a cofactor.

The protein localises to the plastid. Its subcellular location is the chloroplast thylakoid membrane. In terms of biological role, participates in electron transfer between P700 and the cytochrome b6-f complex in photosystem I. Has antiviral activity against Potato virus Y (strain N). This Ulva pertusa (Sea lettuce) protein is Plastocyanin (PETE).